The primary structure comprises 250 residues: uncharacterized protein (250 aa).

Belongs to the glycosyltransferase 2 family.

This is an uncharacterized protein from Haemophilus influenzae (strain ATCC 51907 / DSM 11121 / KW20 / Rd).